Here is a 545-residue protein sequence, read N- to C-terminus: MITPSEFKRLYKIIEVQLRYGLDDFLPEDPRTKMPKMARKSLFWIKNQHPDKSLGERLRLALQELGPVWIKFGQMMSTRRDLFPPHIADQLALLQDQVEPFDGNLAKEHMELSLGGPIETWFDDFDETPLASASIAQVHTATLKENGREVVLKVIRPDILPVIQADIKLMYRMAHIVARLLPEARLLRPVEVVREYEKTLLDELNMMREAANSIQLRRNFEDSDTLYVPEMFTDYSSTNLLVMERIYGIQVSDIDALIANGTNMKLLSENAVNIFFTQVFRDSFFHADMHPGNIFVSYENPETPQWIALDCGIVGTLNRDDKRYLAENLLAFFHRDYRKVAELHVDSGWVPQDTNIDEFEFAIRTVCEPIFEKPLCDISFGHVLLNLFNTARRFDMEVQPQLMLLQKTLLYVEGLGRQLYPQLDLWITAKPFLEDWMSRQVGPQAIVEAVKSKAPFWAEKLPELPELLYDSLRQGKVMNQRIDKLYDNFMESRRSQGLARFYFGIGATLVVCSAILFSNHVETIPVASAAMGVTFWLLGWRACRK.

Residues 124-502 form the Protein kinase domain; the sequence is DFDETPLASA…RRSQGLARFY (379 aa). Residues 130–138 and K153 contribute to the ATP site; that span reads LASASIAQV. Catalysis depends on D288, which acts as the Proton acceptor. The next 2 helical transmembrane spans lie at 498-517 and 521-540; these read LARF…AILF and VETI…LLGW.

Belongs to the ABC1 family. UbiB subfamily.

Its subcellular location is the cell inner membrane. Its pathway is cofactor biosynthesis; ubiquinone biosynthesis [regulation]. In terms of biological role, is probably a protein kinase regulator of UbiI activity which is involved in aerobic coenzyme Q (ubiquinone) biosynthesis. The protein is Probable protein kinase UbiB of Photobacterium profundum (strain SS9).